The chain runs to 354 residues: uncharacterized protein (354 aa).

The protein belongs to the band 7/mec-2 family.

The protein resides in the mitochondrion. This is an uncharacterized protein from Schizosaccharomyces pombe (strain 972 / ATCC 24843) (Fission yeast).